The sequence spans 486 residues: Cardiolipin synthase A (486 aa).

Helical transmembrane passes span 3 to 23 and 38 to 58; these read TFYTVVSWLVILGYWLLIAGV and MAWLLIIYILPLVGIIAYLSF. 2 PLD phosphodiesterase domains span residues 219-246 and 399-426; these read MDLRQHRKMIMIDNYIAYTGSMNMVDPR and EGGLLHTKSVLVDGELSLVGTVNLDMRS. Catalysis depends on residues His224, Lys226, Asp231, His404, Lys406, and Asp411.

It belongs to the phospholipase D family. Cardiolipin synthase subfamily. ClsA sub-subfamily.

The protein resides in the cell inner membrane. It catalyses the reaction 2 a 1,2-diacyl-sn-glycero-3-phospho-(1'-sn-glycerol) = a cardiolipin + glycerol. In terms of biological role, catalyzes the reversible phosphatidyl group transfer from one phosphatidylglycerol molecule to another to form cardiolipin (CL) (diphosphatidylglycerol) and glycerol. This Escherichia fergusonii (strain ATCC 35469 / DSM 13698 / CCUG 18766 / IAM 14443 / JCM 21226 / LMG 7866 / NBRC 102419 / NCTC 12128 / CDC 0568-73) protein is Cardiolipin synthase A.